We begin with the raw amino-acid sequence, 251 residues long: uncharacterized protein (251 aa).

10-34 serves as a coordination point for NADP(+); sequence ITGAGSGIGKKAAVMFAERGAKVAI. Ser139 provides a ligand contact to substrate. The active-site Proton acceptor is the Tyr152.

This sequence belongs to the short-chain dehydrogenases/reductases (SDR) family.

This is an uncharacterized protein from Thermotoga maritima (strain ATCC 43589 / DSM 3109 / JCM 10099 / NBRC 100826 / MSB8).